A 202-amino-acid polypeptide reads, in one-letter code: Protein-methionine-sulfoxide reductase heme-binding subunit MsrQ (202 aa).

A run of 6 helical transmembrane segments spans residues 8–28 (LAVF…AWIF), 42–62 (LGLG…LQKL), 75–95 (LGLW…VFIL), 110–130 (PYII…ITSN), 147–167 (LVYL…RADL), and 169–189 (EWTL…PSIA).

The protein belongs to the MsrQ family. In terms of assembly, heterodimer of a catalytic subunit (MsrP) and a heme-binding subunit (MsrQ). It depends on FMN as a cofactor. Heme b is required as a cofactor.

Its subcellular location is the cell inner membrane. Its function is as follows. Part of the MsrPQ system that repairs oxidized periplasmic proteins containing methionine sulfoxide residues (Met-O), using respiratory chain electrons. Thus protects these proteins from oxidative-stress damage caused by reactive species of oxygen and chlorine generated by the host defense mechanisms. MsrPQ is essential for the maintenance of envelope integrity under bleach stress, rescuing a wide series of structurally unrelated periplasmic proteins from methionine oxidation. MsrQ provides electrons for reduction to the reductase catalytic subunit MsrP, using the quinone pool of the respiratory chain. This Pseudomonas aeruginosa (strain ATCC 15692 / DSM 22644 / CIP 104116 / JCM 14847 / LMG 12228 / 1C / PRS 101 / PAO1) protein is Protein-methionine-sulfoxide reductase heme-binding subunit MsrQ.